Here is a 179-residue protein sequence, read N- to C-terminus: Large ribosomal subunit protein uL10 (179 aa).

Belongs to the universal ribosomal protein uL10 family. As to quaternary structure, part of the ribosomal stalk of the 50S ribosomal subunit. The N-terminus interacts with L11 and the large rRNA to form the base of the stalk. The C-terminus forms an elongated spine to which L12 dimers bind in a sequential fashion forming a multimeric L10(L12)X complex.

Functionally, forms part of the ribosomal stalk, playing a central role in the interaction of the ribosome with GTP-bound translation factors. This is Large ribosomal subunit protein uL10 from Thermotoga neapolitana (strain ATCC 49049 / DSM 4359 / NBRC 107923 / NS-E).